We begin with the raw amino-acid sequence, 151 residues long: Ribosome maturation factor RimP (151 aa).

This sequence belongs to the RimP family.

Its subcellular location is the cytoplasm. Its function is as follows. Required for maturation of 30S ribosomal subunits. The chain is Ribosome maturation factor RimP from Haemophilus influenzae (strain PittGG).